A 67-amino-acid chain; its full sequence is Prokaryotic ubiquitin-like protein Pup (67 aa).

Residues 1-26 (MATKETGGQKHATRRNQEVEEIEVTT) are disordered. The ARC ATPase binding stretch occupies residues 23–61 (EVTTETSVRNEKLAEDVDDILDEIDEVLESNAEDFVRQF). Residues 27–55 (ETSVRNEKLAEDVDDILDEIDEVLESNAE) are a coiled coil. E67 participates in a covalent cross-link: Isoglutamyl lysine isopeptide (Glu-Lys) (interchain with K-? in acceptor proteins).

Belongs to the prokaryotic ubiquitin-like protein family. As to quaternary structure, strongly interacts with the proteasome-associated ATPase ARC through a hydrophobic interface; the interacting region of Pup lies in its C-terminal half. There is one Pup binding site per ARC hexamer ring.

The protein operates within protein degradation; proteasomal Pup-dependent pathway. Its function is as follows. Protein modifier that is covalently attached to lysine residues of substrate proteins, thereby targeting them for proteasomal degradation. The tagging system is termed pupylation. This Thermobifida fusca (strain YX) protein is Prokaryotic ubiquitin-like protein Pup.